The chain runs to 160 residues: Transcription elongation factor GreA (160 aa).

A coiled-coil region spans residues 2–81; the sequence is AEKKNILTYE…KNAEVVVEDE (80 aa). The disordered stretch occupies residues 36–55; sequence KEAREQGDLSENAEYDAAKD.

The protein belongs to the GreA/GreB family.

Necessary for efficient RNA polymerase transcription elongation past template-encoded arresting sites. The arresting sites in DNA have the property of trapping a certain fraction of elongating RNA polymerases that pass through, resulting in locked ternary complexes. Cleavage of the nascent transcript by cleavage factors such as GreA or GreB allows the resumption of elongation from the new 3'terminus. GreA releases sequences of 2 to 3 nucleotides. In Lachnoclostridium phytofermentans (strain ATCC 700394 / DSM 18823 / ISDg) (Clostridium phytofermentans), this protein is Transcription elongation factor GreA.